We begin with the raw amino-acid sequence, 609 residues long: Glutamine--fructose-6-phosphate aminotransferase [isomerizing] (609 aa).

The active-site Nucleophile; for GATase activity is Cys-2. Residues 2 to 219 (CGIFGYLGNQ…SGEFAIVSQG (218 aa)) form the Glutamine amidotransferase type-2 domain. SIS domains lie at 285-426 (LSDV…VHGA) and 458-599 (WAQP…IDCP). Catalysis depends on Lys-604, which acts as the For Fru-6P isomerization activity.

In terms of assembly, homodimer.

It localises to the cytoplasm. The enzyme catalyses D-fructose 6-phosphate + L-glutamine = D-glucosamine 6-phosphate + L-glutamate. Its function is as follows. Catalyzes the first step in hexosamine metabolism, converting fructose-6P into glucosamine-6P using glutamine as a nitrogen source. In Chlamydia pneumoniae (Chlamydophila pneumoniae), this protein is Glutamine--fructose-6-phosphate aminotransferase [isomerizing].